Here is a 354-residue protein sequence, read N- to C-terminus: MLFHLRTLLNNAALRNGHNFVVRNFRCGQPLQDKVQLKGRDLLTLKNFTGEEIKYMLWLSADLKFRIKQKGEYLPLLQGKSLGMIFEKRSTRTRLSTETGFALLGGHPCFLTTDDIHLGVNESLTDTARVLSSMTDAVLARVYKQSDLDLLAKEASIPIVNGLSDLYHPIQILADYLTLQEHYGSLKGLTLSWIGDGNNILHSIMMSAAKFGMHLQVATPKGYEPDPSITKMAEQYAKENGTKLSLTNDPLEAACGGNVLITDTWISMGQEEEKKKRLQAFQGYQVTMKTAKVAAPDWTFLHCLPRKPEEVDDEVFYSPRSLVSPEAENRKWTIMAVMVSLLTDYSPQLQKPKF.

The N-terminal 32 residues, Met1–Gln32, are a transit peptide targeting the mitochondrion. Lys70 carries the post-translational modification N6-acetyllysine; alternate. At Lys70 the chain carries N6-succinyllysine; alternate. Lys80 carries the N6-succinyllysine modification. Lys88 is subject to N6-acetyllysine; alternate. Lys88 bears the N6-succinyllysine; alternate mark. Ser133 bears the Phosphoserine mark. Residues Lys144, Lys221, Lys231, and Lys238 each carry the N6-acetyllysine; alternate modification. 4 positions are modified to N6-succinyllysine; alternate: Lys144, Lys221, Lys231, and Lys238. Lys243 carries the N6-acetyllysine modification. Asp263 is an active-site residue. Lys274 and Lys289 each carry N6-succinyllysine. Lys292 carries the N6-acetyllysine; alternate modification. Lys292 is modified (N6-succinyllysine; alternate). Cys303 is an active-site residue. Lys307 is subject to N6-acetyllysine; alternate. Lys307 carries the post-translational modification N6-succinyllysine; alternate.

The protein belongs to the aspartate/ornithine carbamoyltransferase superfamily. OTCase family. In terms of assembly, homotrimer. In terms of processing, acetylation at Lys-88 negatively regulates ornithine carbamoyltransferase activity in response to nutrient signals.

Its subcellular location is the mitochondrion matrix. The catalysed reaction is carbamoyl phosphate + L-ornithine = L-citrulline + phosphate + H(+). It functions in the pathway nitrogen metabolism; urea cycle; L-citrulline from L-ornithine and carbamoyl phosphate: step 1/1. Its activity is regulated as follows. Negatively regulated by lysine acetylation. Its function is as follows. Catalyzes the second step of the urea cycle, the condensation of carbamoyl phosphate with L-ornithine to form L-citrulline. The urea cycle ensures the detoxification of ammonia by converting it to urea for excretion. In Bos taurus (Bovine), this protein is Ornithine transcarbamylase, mitochondrial.